The sequence spans 601 residues: DNA ligase (601 aa).

D258 lines the ATP pocket. The active-site N6-AMP-lysine intermediate is the K260. Residues R265, R280, E310, F350, R427, and K433 each contribute to the ATP site. Residues 568 to 601 (DKSPEDATTTDEILEMYNKQPKKKIESPPIDESV) are disordered.

This sequence belongs to the ATP-dependent DNA ligase family. It depends on Mg(2+) as a cofactor.

It carries out the reaction ATP + (deoxyribonucleotide)n-3'-hydroxyl + 5'-phospho-(deoxyribonucleotide)m = (deoxyribonucleotide)n+m + AMP + diphosphate.. In terms of biological role, DNA ligase that seals nicks in double-stranded DNA during DNA replication, DNA recombination and DNA repair. This Saccharolobus islandicus (strain Y.N.15.51 / Yellowstone #2) (Sulfolobus islandicus) protein is DNA ligase.